The chain runs to 317 residues: Large ribosomal subunit protein uL10z (317 aa).

The protein belongs to the universal ribosomal protein uL10 family. P0 forms a pentameric complex by interaction with dimers of P1 and P2. In terms of processing, phosphorylated.

Its function is as follows. Ribosomal protein P0 is the functional equivalent of E.coli protein L10. This chain is Large ribosomal subunit protein uL10z (RPP0A), found in Arabidopsis thaliana (Mouse-ear cress).